The sequence spans 121 residues: UPF0145 protein SAV_4658 (121 aa).

The protein belongs to the UPF0145 family.

The protein is UPF0145 protein SAV_4658 of Streptomyces avermitilis (strain ATCC 31267 / DSM 46492 / JCM 5070 / NBRC 14893 / NCIMB 12804 / NRRL 8165 / MA-4680).